Reading from the N-terminus, the 208-residue chain is Guanylate kinase (208 aa).

The region spanning 5–184 is the Guanylate kinase-like domain; sequence GLLIVFSGPS…AAERVKCVIE (180 aa). Residue 12-19 coordinates ATP; that stretch reads GPSGVGKG.

It belongs to the guanylate kinase family.

It is found in the cytoplasm. The catalysed reaction is GMP + ATP = GDP + ADP. Essential for recycling GMP and indirectly, cGMP. The chain is Guanylate kinase from Streptococcus pneumoniae (strain ATCC BAA-255 / R6).